A 140-amino-acid chain; its full sequence is Nucleoside diphosphate kinase (140 aa).

6 residues coordinate ATP: K11, F59, R87, T93, R104, and N114. H117 functions as the Pros-phosphohistidine intermediate in the catalytic mechanism.

Belongs to the NDK family. Homotetramer. It depends on Mg(2+) as a cofactor.

It is found in the cytoplasm. The catalysed reaction is a 2'-deoxyribonucleoside 5'-diphosphate + ATP = a 2'-deoxyribonucleoside 5'-triphosphate + ADP. The enzyme catalyses a ribonucleoside 5'-diphosphate + ATP = a ribonucleoside 5'-triphosphate + ADP. In terms of biological role, major role in the synthesis of nucleoside triphosphates other than ATP. The ATP gamma phosphate is transferred to the NDP beta phosphate via a ping-pong mechanism, using a phosphorylated active-site intermediate. The polypeptide is Nucleoside diphosphate kinase (Rhodospirillum centenum (strain ATCC 51521 / SW)).